We begin with the raw amino-acid sequence, 650 residues long: DNA mismatch repair protein MutL (650 aa).

Disordered stretches follow at residues 358-392 (EASQ…QPLV) and 408-448 (QPRP…QSAA). Residues 367–384 (TPQPRPALTPGHPDPPPQ) are compositionally biased toward pro residues. Low complexity predominate over residues 430–444 (PYAPIAAAPVPASEP).

The protein belongs to the DNA mismatch repair MutL/HexB family.

Its function is as follows. This protein is involved in the repair of mismatches in DNA. It is required for dam-dependent methyl-directed DNA mismatch repair. May act as a 'molecular matchmaker', a protein that promotes the formation of a stable complex between two or more DNA-binding proteins in an ATP-dependent manner without itself being part of a final effector complex. The polypeptide is DNA mismatch repair protein MutL (Geobacter sp. (strain M21)).